A 134-amino-acid polypeptide reads, in one-letter code: Outer membrane lipoprotein RcsF (134 aa).

The first 15 residues, 1–15, serve as a signal peptide directing secretion; that stretch reads MRALPICLVALMLSG. Cys16 carries the N-palmitoyl cysteine lipid modification. Residue Cys16 is the site of S-diacylglycerol cysteine attachment. 2 disordered regions span residues 22-48 and 67-88; these read SPVEPVQSTAPQPKAEPAKPKAPRATP and GEVSGDSCQASNQDSPPSIPTA. Residues 72–82 are compositionally biased toward polar residues; that stretch reads DSCQASNQDSP. Disulfide bonds link Cys74–Cys118 and Cys109–Cys124.

This sequence belongs to the RcsF family.

It is found in the cell outer membrane. Its function is as follows. Essential component of the Rcs signaling system, which controls transcription of numerous genes. Plays a role in signal transduction from the cell surface to the histidine kinase RcsC. May detect outer membrane defects. The chain is Outer membrane lipoprotein RcsF from Escherichia coli O6:H1 (strain CFT073 / ATCC 700928 / UPEC).